The sequence spans 278 residues: Thioredoxin-related transmembrane protein 1 (278 aa).

A signal peptide spans 1–26 (MAPSGSLRIPVAVLLLLLWGAPWAHG). In terms of domain architecture, Thioredoxin spans 27–132 (KRSDVRIITD…FINFISDKEW (106 aa)). Over 27–180 (KRSDVRIITD…EDLGLPIWGS (154 aa)) the chain is Extracellular. Residues Cys-56 and Cys-59 each act as nucleophile in the active site. Cys-56 and Cys-59 form a disulfide bridge. Residues 181–203 (YTVFALATLLSGLLLGLFMIFVA) traverse the membrane as a helical segment. Residues 204 to 278 (DCLCPSKRRR…VGPSLATDKS (75 aa)) are Cytoplasmic-facing. S-palmitoyl cysteine attachment occurs at residues Cys-205 and Cys-207. The tract at residues 213 to 278 (RPQPYPSRKL…VGPSLATDKS (66 aa)) is disordered. Residues Ser-226, Ser-245, Ser-268, Ser-272, and Ser-278 each carry the phosphoserine modification. Over residues 235–250 (EEQEADVEDVSEEESE) the composition is skewed to acidic residues.

In terms of assembly, interacts with ATP2A2. Post-translationally, palmitoylated; palmitoylation is required for localization to mitochondria-associated endoplasmic reticulum membrane (MAM).

It localises to the endoplasmic reticulum membrane. It is found in the mitochondrion membrane. The protein resides in the secreted. The enzyme catalyses Catalyzes the rearrangement of -S-S- bonds in proteins.. Functionally, thiredoxin domain-containing protein that participates in various redox reactions through the reversible oxidation of its active center dithiol to a disulfide and catalyze dithiol-disulfide exchange reactions. Acts as a key inhibitor of the alternative triglyceride biosynthesis pathway by inhibiting the activity of TMEM68/DIESL at the endoplasmic reticulum, thereby restricting accumulation of triacylglycerol. The alternative triglyceride biosynthesis pathway mediates formation of triacylglycerol from diacylglycerol and membrane phospholipids. Acts as a protein disulfide isomerase by catalyzing formation or reduction of disulfide bonds. Specifically mediates formation of disulfide bonds of transmembrane proteins at the endoplasmic reticulum membrane. Involved in endoplasmic reticulum-associated degradation (ERAD) via its protein disulfide isomerase activity by acting on folding-defective polypeptides at the endoplasmic reticulum membrane. Acts as a negative regulator of platelet aggregation following secretion in the extracellular space. Acts as a regulator of endoplasmic reticulum-mitochondria contact sites via its ability to regulate redox signals. Regulates endoplasmic reticulum-mitochondria Ca(2+) flux. The protein is Thioredoxin-related transmembrane protein 1 (TMX1) of Bos taurus (Bovine).